The sequence spans 670 residues: MAAAAAASSMAKRKQRKAATEQEVENHDEATVAAEAGPENDGHTAHAAEEAAAAEEGVEREGGGEGGAEGEEGPDAAARGGEEGKEEEEREVSFDELGLDEQLKRALRKKGLDKATPIQREAIPLILEGKDVVAKAKTGSGKTFAYLLPMLHELLKLSAEGRIRKSAPNVFILVPTRELCQQVHNEASSLLEFCTSKLKVVQVNASMSDKDIKVALSGPPNILVTTPACVASCISKGIIRGSSIKESLSMMILDEADLLLSYRCEDDIKALVPHIPRSCQSILMSATSSADIEKLTKLLLHNPFILTLTEVGHAKDDLIPKNVQQFWISCDAKDKMLYILVLLKLELIQKKVLIFVNSIDSAFKLRLFLEKFGIRSSVLNAELPQNSRLHIIQAFNARLFDYLIATDDNKSKEERQANKGNKKDSRVSRKQLQQTLDAEFGVVRGIDFKNVFTVVNYDMPPDPAGYVHRVGRTGRANKTGASISLVSPKENGIFEDIENMLKDVENRDTSCISPFPLLTKNAVESLRYRAQDVARSVTTRDIKEARRQDIKNEILNSEKLKAHFDENPRDLDLLKHDKLLSNKEIPAHLRDVPEYLIDPTTKEASNVVKLSRAAMDIDKPRRRKRMGFKGGSGRSSDPLKTFSAEGKSRRRGRKERDGEQDRRKRKKVES.

Residues 1–10 (MAAAAAASSM) are compositionally biased toward low complexity. The tract at residues 1 to 97 (MAAAAAASSM…EEREVSFDEL (97 aa)) is disordered. Basic and acidic residues-rich tracts occupy residues 18–30 (AATE…HDEA) and 40–49 (NDGHTAHAAE). Positions 92-120 (VSFDELGLDEQLKRALRKKGLDKATPIQR) match the Q motif motif. Residues 123–306 (IPLILEGKDV…KLLLHNPFIL (184 aa)) form the Helicase ATP-binding domain. An ATP-binding site is contributed by 136–143 (AKTGSGKT). Residues 254-257 (DEAD) carry the DEAD box motif. The region spanning 340–523 (LVLLKLELIQ…PFPLLTKNAV (184 aa)) is the Helicase C-terminal domain. Residues 616 to 670 (DIDKPRRRKRMGFKGGSGRSSDPLKTFSAEGKSRRRGRKERDGEQDRRKRKKVES) are disordered. A compositionally biased stretch (basic and acidic residues) spans 654 to 670 (KERDGEQDRRKRKKVES).

Belongs to the DEAD box helicase family. DDX56/DBP9 subfamily.

The enzyme catalyses ATP + H2O = ADP + phosphate + H(+). The polypeptide is DEAD-box ATP-dependent RNA helicase 16 (Oryza sativa subsp. japonica (Rice)).